The primary structure comprises 224 residues: Protein YiiM (224 aa).

Positions 26–163 (IQVDGELMLT…VSADAPLELV (138 aa)) constitute an MOSC domain.

As to quaternary structure, monomer.

The sequence is that of Protein YiiM (yiiM) from Escherichia coli (strain K12).